The primary structure comprises 129 residues: Small ribosomal subunit protein uS11 (129 aa).

This sequence belongs to the universal ribosomal protein uS11 family. Part of the 30S ribosomal subunit. Interacts with proteins S7 and S18. Binds to IF-3.

Located on the platform of the 30S subunit, it bridges several disparate RNA helices of the 16S rRNA. Forms part of the Shine-Dalgarno cleft in the 70S ribosome. In Macrococcus caseolyticus (strain JCSC5402) (Macrococcoides caseolyticum), this protein is Small ribosomal subunit protein uS11.